The chain runs to 549 residues: Beta-hexosaminidase Amuc_0868 (549 aa).

A signal peptide spans 1 to 28 (MISKCTFSATVFSLFSLCWGAPSSPVLE). Residue Arg161 participates in substrate binding. Catalysis depends on charge relay system residues Asp190 and His260. Asp326 is a binding site for substrate. Glu327 acts as the Charge relay system in catalysis. Substrate is bound by residues Trp393, 420–422 (YFD), and 474–476 (WTE). The disordered stretch occupies residues 526-549 (GVNYKRPDNGAPAQPKAVITRERR).

The protein belongs to the glycosyl hydrolase 20 family.

The enzyme catalyses Hydrolysis of terminal non-reducing N-acetyl-D-hexosamine residues in N-acetyl-beta-D-hexosaminides.. Its activity is regulated as follows. Inhibited strongly by Cu(2+), Zn(2+), Cd(2+) and Ni(2+) ions. No effect on activity with Na(+), Li(+), K(+), Ca(2+), Mg(2+) or Mn(2+) ions. Potentially capable of cleaving the specific glycoside linkages in the process of mucin degradation in human intestinal tract. Hydrolyzes chromogenic substrates pNP-beta-GlcNAc with high activity and pNP-beta-GalNAc to a lesser extent, but not pNP-beta-glucose or pNP-beta-galactose. This Akkermansia muciniphila (strain ATCC BAA-835 / DSM 22959 / JCM 33894 / BCRC 81048 / CCUG 64013 / CIP 107961 / Muc) protein is Beta-hexosaminidase Amuc_0868.